A 149-amino-acid chain; its full sequence is Probable flagellum biosynthesis repressor protein FlbT (149 aa).

Belongs to the FlbT family.

Functionally, has a post-transcriptional repressor function in flagellum biogenesis. Associates with the 5'-UTR of fljK mRNA and promotes its degradation. This is Probable flagellum biosynthesis repressor protein FlbT from Rhizobium johnstonii (strain DSM 114642 / LMG 32736 / 3841) (Rhizobium leguminosarum bv. viciae).